The primary structure comprises 101 residues: MSLPRRAAHAAIRAYQLTLSGLVGRQCRHWPSCSAYADEAIQRHGLWAGGWMGLARICRCGPFGTHGIDLVCEALPEGAAWHRPWAYGRWRGVNAPAPLGE.

It belongs to the UPF0161 family.

Its subcellular location is the cell inner membrane. Its function is as follows. Could be involved in insertion of integral membrane proteins into the membrane. This is Putative membrane protein insertion efficiency factor from Methylobacterium sp. (strain 4-46).